We begin with the raw amino-acid sequence, 391 residues long: 3-ketoacyl-CoA thiolase (391 aa).

Residue cysteine 95 is the Acyl-thioester intermediate of the active site. Catalysis depends on proton acceptor residues histidine 347 and cysteine 377.

The protein belongs to the thiolase-like superfamily. Thiolase family. As to quaternary structure, heterotetramer of two alpha chains (FadB) and two beta chains (FadA).

It is found in the cytoplasm. The enzyme catalyses an acyl-CoA + acetyl-CoA = a 3-oxoacyl-CoA + CoA. The protein operates within lipid metabolism; fatty acid beta-oxidation. Functionally, catalyzes the final step of fatty acid oxidation in which acetyl-CoA is released and the CoA ester of a fatty acid two carbons shorter is formed. The sequence is that of 3-ketoacyl-CoA thiolase from Pseudomonas savastanoi pv. phaseolicola (strain 1448A / Race 6) (Pseudomonas syringae pv. phaseolicola (strain 1448A / Race 6)).